The chain runs to 136 residues: Histone H3.3-like type 2 (136 aa).

The tract at residues 1-20 (MARTKQTARKSTGGKAPRKA) is disordered. An N6-acetyllysine; alternate mark is found at Lys-5 and Lys-10. 2 positions are modified to N6-methylated lysine; alternate: Lys-5 and Lys-10. The residue at position 11 (Ser-11) is a Phosphoserine. An N6-acetyllysine mark is found at Lys-15 and Lys-24. Lys-28 is subject to N6-methylated lysine. Ser-29 carries the phosphoserine modification. An N6-methylated lysine mark is found at Lys-37 and Lys-80.

It belongs to the histone H3 family. In terms of assembly, the nucleosome is a histone octamer containing two molecules each of H2A, H2B, H3 and H4 assembled in one H3-H4 heterotetramer and two H2A-H2B heterodimers. The octamer wraps approximately 147 bp of DNA. Post-translationally, acetylation is generally linked to gene activation. Methylation at Lys-5 is linked to gene activation. Methylation at Lys-10 is linked to gene repression.

The protein localises to the nucleus. It is found in the chromosome. Putative variant histone H3 which may replace conventional H3 in a subset of nucleosomes. Nucleosomes wrap and compact DNA into chromatin, limiting DNA accessibility to the cellular machineries which require DNA as a template. Histones thereby play a central role in transcription regulation, DNA repair, DNA replication and chromosomal stability. DNA accessibility is regulated via a complex set of post-translational modifications of histones, also called histone code, and nucleosome remodeling. This Caenorhabditis elegans protein is Histone H3.3-like type 2 (his-74).